The following is a 298-amino-acid chain: Acetyl-coenzyme A carboxylase carboxyl transferase subunit beta (298 aa).

The segment at 1-21 (MNQEVKSGKVLSPSTPWTQRP) is disordered. Positions 41-298 (PTIECPECHA…RLVSKLMNLP (258 aa)) constitute a CoA carboxyltransferase N-terminal domain. 4 residues coordinate Zn(2+): cysteine 45, cysteine 48, cysteine 64, and cysteine 67. The segment at 45-67 (CPECHALVTRTAISFNAYVCPQC) adopts a C4-type zinc-finger fold.

It belongs to the AccD/PCCB family. In terms of assembly, acetyl-CoA carboxylase is a heterohexamer composed of biotin carboxyl carrier protein (AccB), biotin carboxylase (AccC) and two subunits each of ACCase subunit alpha (AccA) and ACCase subunit beta (AccD). Zn(2+) serves as cofactor.

Its subcellular location is the cytoplasm. It catalyses the reaction N(6)-carboxybiotinyl-L-lysyl-[protein] + acetyl-CoA = N(6)-biotinyl-L-lysyl-[protein] + malonyl-CoA. The protein operates within lipid metabolism; malonyl-CoA biosynthesis; malonyl-CoA from acetyl-CoA: step 1/1. Component of the acetyl coenzyme A carboxylase (ACC) complex. Biotin carboxylase (BC) catalyzes the carboxylation of biotin on its carrier protein (BCCP) and then the CO(2) group is transferred by the transcarboxylase to acetyl-CoA to form malonyl-CoA. The protein is Acetyl-coenzyme A carboxylase carboxyl transferase subunit beta of Acinetobacter baumannii (strain AYE).